We begin with the raw amino-acid sequence, 346 residues long: L-malyl-CoA/beta-methylmalyl-CoA lyase (346 aa).

The Mg(2+) site is built by E148 and D177. Substrate-binding positions include 176 to 177 (VD) and 253 to 254 (LH).

Belongs to the HpcH/HpaI aldolase family. Mg(2+) is required as a cofactor. The cofactor is Mn(2+).

The enzyme catalyses (S)-malyl-CoA = glyoxylate + acetyl-CoA. It catalyses the reaction (2R,3S)-beta-methylmalyl-CoA = propanoyl-CoA + glyoxylate. Involved in the methylaspartate cycle. Catalyzes the reversible cleavage of beta-methylmalyl-CoA to propionyl-CoA and glyoxylate, as well as the reversible cleavage of (S)-malyl-CoA to acetyl-CoA and glyoxylate. In addition, it has a small malyl-CoA thioesterase activity. It can also catalyze the cleavage of (S)-citramalyl-CoA to acetyl-CoA and pyruvate. The protein is L-malyl-CoA/beta-methylmalyl-CoA lyase (citE1) of Haloarcula marismortui (strain ATCC 43049 / DSM 3752 / JCM 8966 / VKM B-1809) (Halobacterium marismortui).